The following is a 240-amino-acid chain: Lactate utilization protein C (240 aa).

The protein belongs to the LutC/YkgG family.

Functionally, is involved in L-lactate degradation and allows cells to grow with lactate as the sole carbon source. This Geobacillus thermodenitrificans (strain NG80-2) protein is Lactate utilization protein C.